A 101-amino-acid chain; its full sequence is Small ribosomal subunit protein uS14 (101 aa).

This sequence belongs to the universal ribosomal protein uS14 family. In terms of assembly, part of the 30S ribosomal subunit. Contacts proteins S3 and S10.

In terms of biological role, binds 16S rRNA, required for the assembly of 30S particles and may also be responsible for determining the conformation of the 16S rRNA at the A site. In Sphingopyxis alaskensis (strain DSM 13593 / LMG 18877 / RB2256) (Sphingomonas alaskensis), this protein is Small ribosomal subunit protein uS14.